The chain runs to 124 residues: UPF0102 protein Noca_3248 (124 aa).

Belongs to the UPF0102 family.

This Nocardioides sp. (strain ATCC BAA-499 / JS614) protein is UPF0102 protein Noca_3248.